A 767-amino-acid chain; its full sequence is Probable beta-D-xylosidase 7 (767 aa).

Positions 1-19 (MAKQLLLLLLLFIVHGVES) are cleaved as a signal peptide. Asn100 is a glycosylation site (N-linked (GlcNAc...) asparagine). Residue Asp292 is part of the active site. Asn643 carries an N-linked (GlcNAc...) asparagine glycan.

This sequence belongs to the glycosyl hydrolase 3 family.

It localises to the secreted. The protein resides in the extracellular space. It is found in the extracellular matrix. The protein is Probable beta-D-xylosidase 7 (BXL7) of Arabidopsis thaliana (Mouse-ear cress).